The chain runs to 217 residues: 3,4-dihydroxy-2-butanone 4-phosphate synthase (217 aa).

D-ribulose 5-phosphate contacts are provided by residues 37–38 (RE), aspartate 42, 150–154 (RRGHT), and glutamate 174. Glutamate 38 is a binding site for Mg(2+). Histidine 153 contributes to the Mg(2+) binding site.

It belongs to the DHBP synthase family. As to quaternary structure, homodimer. Requires Mg(2+) as cofactor. Mn(2+) is required as a cofactor.

The enzyme catalyses D-ribulose 5-phosphate = (2S)-2-hydroxy-3-oxobutyl phosphate + formate + H(+). Its pathway is cofactor biosynthesis; riboflavin biosynthesis; 2-hydroxy-3-oxobutyl phosphate from D-ribulose 5-phosphate: step 1/1. Its function is as follows. Catalyzes the conversion of D-ribulose 5-phosphate to formate and 3,4-dihydroxy-2-butanone 4-phosphate. This chain is 3,4-dihydroxy-2-butanone 4-phosphate synthase, found in Shewanella oneidensis (strain ATCC 700550 / JCM 31522 / CIP 106686 / LMG 19005 / NCIMB 14063 / MR-1).